The chain runs to 80 residues: Small ribosomal subunit protein bS21 (80 aa).

The protein belongs to the bacterial ribosomal protein bS21 family.

The sequence is that of Small ribosomal subunit protein bS21 from Rhodospirillum rubrum (strain ATCC 11170 / ATH 1.1.1 / DSM 467 / LMG 4362 / NCIMB 8255 / S1).